Here is a 222-residue protein sequence, read N- to C-terminus: Coiled-coil domain-containing protein 70 (222 aa).

Coiled-coil stretches lie at residues Leu34 to Arg62 and Asn129 to Trp188.

This Bos taurus (Bovine) protein is Coiled-coil domain-containing protein 70 (CCDC70).